A 1493-amino-acid polypeptide reads, in one-letter code: Protein Shroom4 (1493 aa).

Positions 10-92 (YVPVQLQGGA…ILKLIVRRRN (83 aa)) constitute a PDZ domain. The disordered stretch occupies residues 202 to 282 (CALSLRPEEP…PPQPPVRRDS (81 aa)). Composition is skewed to polar residues over residues 234 to 243 (AETSGGSRRT) and 249 to 262 (TPSS…QEGY). The residue at position 411 (Ser-411) is a Phosphoserine. The disordered stretch occupies residues 430–695 (GSKGMELPPV…SPGQRPGQSS (266 aa)). 2 stretches are compositionally biased toward basic and acidic residues: residues 470–484 (QSSK…DDRS) and 498–509 (GEADGHPSEKGF). Residues 513-547 (NRTSRAASELANQQPSASGSLVQQATDCSSTTKAA) show a composition bias toward polar residues. Residue Ser-729 is modified to Phosphoserine. Disordered regions lie at residues 740 to 759 (AAME…ASTA) and 781 to 813 (SKSL…NFQP). Positions 782-802 (KSLSTSHLPGLTTHSNKTFTQ) are enriched in polar residues. At Ser-1019 the chain carries Phosphoserine. 4 disordered regions span residues 1117-1170 (AAQQ…ETSG), 1187-1206 (SFGH…AEQE), 1214-1236 (DFLP…PCYY), and 1246-1265 (GQEA…PPSG). The segment covering 1118–1129 (AQQQKQQQQQQK) has biased composition (low complexity). Acidic residues predominate over residues 1132-1159 (EEEEEEEEEEEEEEEEEEEEAEEEEEEL). Positions 1213–1492 (SDFLPPIRGH…RESLLLGPSN (280 aa)) constitute an ASD2 domain. The stretch at 1382 to 1488 (LSGRLARVEN…LKCLRESLLL (107 aa)) forms a coiled coil.

The protein belongs to the shroom family. In terms of assembly, interacts directly with F-actin. Expressed in all fetal and adult tissues investigated. Expressed in adult heart, brain, placenta, lung, liver, skeletal muscle, kidney and pancreas. In brain regions detected in cerebellum, cerebral cortex, medulla, spinal cord, occipital pole, frontal lobe, temporal lobe and putamen. The expression is strongest in the medulla and weakest in the cerebral cortex.

The protein localises to the cytoplasm. It localises to the cytoskeleton. Probable regulator of cytoskeletal architecture that plays an important role in development. May regulate cellular and cytoskeletal architecture by modulating the spatial distribution of myosin II. The protein is Protein Shroom4 (SHROOM4) of Homo sapiens (Human).